We begin with the raw amino-acid sequence, 497 residues long: uncharacterized protein (497 aa).

The tract at residues I58–A79 is disordered. Transmembrane regions (helical) follow at residues I86 to I106, F120 to L140, F155 to A175, W180 to Y200, L222 to A242, V258 to F278, F309 to Q329, G348 to L368, M378 to L398, F407 to L427, I438 to C458, and V468 to L488.

This sequence belongs to the major facilitator superfamily.

It localises to the membrane. This is an uncharacterized protein from Schizosaccharomyces pombe (strain 972 / ATCC 24843) (Fission yeast).